A 145-amino-acid polypeptide reads, in one-letter code: Transcription antitermination protein NusB (145 aa).

It belongs to the NusB family.

Its function is as follows. Involved in transcription antitermination. Required for transcription of ribosomal RNA (rRNA) genes. Binds specifically to the boxA antiterminator sequence of the ribosomal RNA (rrn) operons. In Geotalea daltonii (strain DSM 22248 / JCM 15807 / FRC-32) (Geobacter daltonii), this protein is Transcription antitermination protein NusB.